Consider the following 590-residue polypeptide: Glypican-3 (590 aa).

The N-terminal stretch at 1–25 (MMPGLKLYGALILCVLVLPFSRPSS) is a signal peptide. Disulfide bonds link C30–C67, C60–C255, C68–C258, C190–C342, C245–C278, C267–C418, and C271–C406. N-linked (GlcNAc...) asparagine glycosylation is found at N119 and N234. N-linked (GlcNAc...) asparagine glycosylation occurs at N414. 2 disordered regions span residues 429–450 (PGPG…TPEP) and 476–520 (WRAR…SGLG). The segment covering 495-513 (TDEDEEGLESGDCDDEDEC) has biased composition (acidic residues). 2 O-linked (Xyl...) (glycosaminoglycan) serine glycosylation sites follow: S504 and S517.

The protein belongs to the glypican family. As to quaternary structure, heterodimer; disulfide-linked. Cleavage by a furin-like convertase results in production of alpha and beta chains which form a disulfide-linked heterodimer. Post-translationally, O-glycosylated; contains heparan sulfate and/or chondroitin sulfate. In terms of processing, cleaved intracellularly by a furin-like convertase to generate 2 subunits, alpha and beta, which remain associated through disulfide bonds and are associated with the cell surface via the GPI-anchor. This processing is essential for its role in inhibition of hedgehog signaling. A second proteolytic event may result in cleavage of the protein on the cell surface, separating it from the GPI-anchor and leading to its shedding from the cell surface. In terms of tissue distribution, maternally expressed and is almost ubiquitous during blastula and gastrula stages but becomes restricted to the prospective hindbrain by 24 hours post-fertilization.

The protein resides in the cell membrane. In terms of biological role, cell surface proteoglycan. Negatively regulates the hedgehog signaling pathway. Positively regulates the canonical and non-canonical Wnt signaling pathways. Binds to CD81 which decreases the availability of free CD81 for binding to the transcriptional repressor HHEX, resulting in nuclear translocation of HHEX and transcriptional repression. Inhibits the dipeptidyl peptidase activity of DPP4. Plays a role in limb patterning and skeletal development. Modulates the effects of growth factors on renal branching morphogenesis. Required for coronary vascular development. Plays a role in regulating cell movements during gastrulation. The protein is Glypican-3 of Danio rerio (Zebrafish).